The primary structure comprises 323 residues: UDP-galactose/UDP-glucose transporter 7 (323 aa).

The Cytoplasmic portion of the chain corresponds to 1 to 10; sequence MEVQAEMEPT. Residues 11–31 form a helical membrane-spanning segment; sequence SSISLVAAVSYGIASMAMVFI. Residues 32 to 35 lie on the Lumenal side of the membrane; it reads NKAV. Residues 36–58 form a helical membrane-spanning segment; that stretch reads IMQYPHSMTVLTLQQLATSLLIH. Residues 59–78 are Cytoplasmic-facing; that stretch reads FGRRMGYTRAKGIDMATAKK. Residues 79–97 form a helical membrane-spanning segment; it reads LLPVSIFYNANVAFALASL. The Lumenal portion of the chain corresponds to 98 to 101; the sequence is KGVN. Residues 102–124 form a helical membrane-spanning segment; the sequence is IPMYIAIKRLTPLAVLISGVLFG. Residues 125–132 are Cytoplasmic-facing; that stretch reads KGKPTTQV. The helical transmembrane segment at 133–153 threads the bilayer; sequence ALSVLLTAAGCVIAALGDFSF. Asp-154 is a topological domain (lumenal). A helical membrane pass occupies residues 155-175; that stretch reads LFGYGLALTSVFFQTMYLVLV. Residues 176 to 186 are Cytoplasmic-facing; it reads EKSGAEDGLSS. The chain crosses the membrane as a helical span at residues 187-207; it reads IEIMFYNSFLSLPFLSILIIV. At 208-226 the chain is on the lumenal side; the sequence is TGEFPNSLSLLLAKCSYLP. The chain crosses the membrane as a helical span at residues 227–247; sequence FLVILILSLVMGIVLNFTMFL. The Cytoplasmic portion of the chain corresponds to 248–252; the sequence is CTIVN. The chain crosses the membrane as a helical span at residues 253–275; sequence SALTTTIVGVLKGVGSTTLGFVL. Topologically, residues 276-278 are lumenal; sequence LGG. The helical transmembrane segment at 279–301 threads the bilayer; that stretch reads VEVHALNVSGLVVNTAGGVWYSY. Residues 302 to 323 are Cytoplasmic-facing; that stretch reads AKYRQKKAKPAKLMSDLEAHKK.

Belongs to the TPT transporter family. UGnT (TC 2.A.7.15) subfamily. In terms of tissue distribution, widely expressed with highest expression in roots.

The protein localises to the golgi apparatus membrane. Nucleotide-sugar transporter that transports UDP-glucose and UDP-galactose. Plays a role in lateral root and root hair development. This chain is UDP-galactose/UDP-glucose transporter 7, found in Arabidopsis thaliana (Mouse-ear cress).